The chain runs to 119 residues: Large ribosomal subunit protein bL20 (119 aa).

It belongs to the bacterial ribosomal protein bL20 family.

Functionally, binds directly to 23S ribosomal RNA and is necessary for the in vitro assembly process of the 50S ribosomal subunit. It is not involved in the protein synthesizing functions of that subunit. The polypeptide is Large ribosomal subunit protein bL20 (Bradyrhizobium sp. (strain BTAi1 / ATCC BAA-1182)).